The sequence spans 661 residues: Heme transporter BhuA (661 aa).

An N-terminal signal peptide occupies residues 1 to 23; it reads MKFTRTLVLVSTSLLATVATSQA. The region spanning 48-159 is the TBDR plug domain; the sequence is KDNIEATGGT…AAGAIRYETV (112 aa). Positions 170 to 661 constitute a TBDR beta-barrel domain; the sequence is TFGARIIGSY…TFTFQTAFKF (492 aa).

It belongs to the TonB-dependent receptor family.

It localises to the cell outer membrane. Its function is as follows. Heme transporter playing an important role in stationary-phase iron acquisition and required for maintenance of chronic infection in mice. The sequence is that of Heme transporter BhuA (bhuA) from Brucella abortus (strain 2308).